Consider the following 450-residue polypeptide: Phosphoglucosamine mutase (450 aa).

The active-site Phosphoserine intermediate is serine 101. Positions 101, 240, 242, and 244 each coordinate Mg(2+). Serine 101 is modified (phosphoserine).

Belongs to the phosphohexose mutase family. It depends on Mg(2+) as a cofactor. Post-translationally, activated by phosphorylation.

The enzyme catalyses alpha-D-glucosamine 1-phosphate = D-glucosamine 6-phosphate. In terms of biological role, catalyzes the conversion of glucosamine-6-phosphate to glucosamine-1-phosphate. This chain is Phosphoglucosamine mutase, found in Streptococcus sanguinis (strain SK36).